A 185-amino-acid polypeptide reads, in one-letter code: Transcription termination/antitermination protein NusG (185 aa).

The region spanning 134-162 (PGQMVRVIDGPFNDFDGLVEEVNYEKNRL) is the KOW domain.

Belongs to the NusG family.

In terms of biological role, participates in transcription elongation, termination and antitermination. The polypeptide is Transcription termination/antitermination protein NusG (Xylella fastidiosa (strain Temecula1 / ATCC 700964)).